We begin with the raw amino-acid sequence, 911 residues long: Chitin synthase G (911 aa).

Disordered regions lie at residues 1-66 and 107-138; these read MAYQ…VSGY and GRVA…GGLR. Over residues 12 to 34 the composition is skewed to basic and acidic residues; the sequence is PHYDDNGHRLQDLPHGSYEEEAS. The span at 54–66 shows a compositional bias: polar residues; sequence QHGSSTTRPVSGY. A run of 6 helical transmembrane segments spans residues 579–599, 624–644, 659–679, 711–731, 840–860, and 879–899; these read IFST…TTVI, IINT…FILA, SFVV…YLVV, IIII…FMYL, LVTF…SDGV, and ALLW…CWFL.

It belongs to the chitin synthase family. Class III subfamily.

It localises to the cell membrane. The enzyme catalyses [(1-&gt;4)-N-acetyl-beta-D-glucosaminyl](n) + UDP-N-acetyl-alpha-D-glucosamine = [(1-&gt;4)-N-acetyl-beta-D-glucosaminyl](n+1) + UDP + H(+). In terms of biological role, polymerizes chitin, a structural polymer of the cell wall and septum, by transferring the sugar moiety of UDP-GlcNAc to the non-reducing end of the growing chitin polymer. The polypeptide is Chitin synthase G (chsG) (Aspergillus fumigatus (strain ATCC MYA-4609 / CBS 101355 / FGSC A1100 / Af293) (Neosartorya fumigata)).